Consider the following 208-residue polypeptide: ATP-dependent Clp protease proteolytic subunit 1 (208 aa).

S108 serves as the catalytic Nucleophile. Residue H133 is part of the active site.

It belongs to the peptidase S14 family. Fourteen ClpP subunits assemble into 2 heptameric rings which stack back to back to give a disk-like structure with a central cavity, resembling the structure of eukaryotic proteasomes.

Its subcellular location is the cytoplasm. It catalyses the reaction Hydrolysis of proteins to small peptides in the presence of ATP and magnesium. alpha-casein is the usual test substrate. In the absence of ATP, only oligopeptides shorter than five residues are hydrolyzed (such as succinyl-Leu-Tyr-|-NHMec, and Leu-Tyr-Leu-|-Tyr-Trp, in which cleavage of the -Tyr-|-Leu- and -Tyr-|-Trp bonds also occurs).. In terms of biological role, cleaves peptides in various proteins in a process that requires ATP hydrolysis. Has a chymotrypsin-like activity. Plays a major role in the degradation of misfolded proteins. This Corynebacterium efficiens (strain DSM 44549 / YS-314 / AJ 12310 / JCM 11189 / NBRC 100395) protein is ATP-dependent Clp protease proteolytic subunit 1.